The chain runs to 435 residues: Probable xyloglucan galactosyltransferase GT19 (435 aa).

Topologically, residues 1–6 (MASKST) are cytoplasmic. Residues 7–23 (VTTLTIFFFFFFFFIEP) traverse the membrane as a helical; Signal-anchor for type II membrane protein segment. Over 24-435 (KVQSQQISAV…GVLDRIISRV (412 aa)) the chain is Lumenal. 3 N-linked (GlcNAc...) asparagine glycosylation sites follow: Asn140, Asn203, and Asn277.

It belongs to the glycosyltransferase 47 family. Expressed in roots, hypocotyls, cotyledons, leaves, stems, stamens and pollen grains.

It localises to the golgi apparatus membrane. In terms of biological role, functions in xyloglucan synthesis by adding side chains to the xylosylated glucan backbone. Involved in the galactosylation of hemicellulose xyloglucan. This chain is Probable xyloglucan galactosyltransferase GT19, found in Arabidopsis thaliana (Mouse-ear cress).